The chain runs to 323 residues: Coiled-coil domain-containing protein 160 (323 aa).

A coiled-coil region spans residues 143–290 (SKLRLNLLNE…IKNELRTEKS (148 aa)).

Belongs to the CCDC160 family.

This Bos taurus (Bovine) protein is Coiled-coil domain-containing protein 160 (CCDC160).